We begin with the raw amino-acid sequence, 310 residues long: tRNA dimethylallyltransferase (310 aa).

Gly19–Ser26 contributes to the ATP binding site. Thr21–Ser26 is a binding site for substrate.

The protein belongs to the IPP transferase family. In terms of assembly, monomer. Mg(2+) serves as cofactor.

The catalysed reaction is adenosine(37) in tRNA + dimethylallyl diphosphate = N(6)-dimethylallyladenosine(37) in tRNA + diphosphate. In terms of biological role, catalyzes the transfer of a dimethylallyl group onto the adenine at position 37 in tRNAs that read codons beginning with uridine, leading to the formation of N6-(dimethylallyl)adenosine (i(6)A). The protein is tRNA dimethylallyltransferase of Saccharopolyspora erythraea (strain ATCC 11635 / DSM 40517 / JCM 4748 / NBRC 13426 / NCIMB 8594 / NRRL 2338).